Consider the following 186-residue polypeptide: Elongation factor P (186 aa).

This sequence belongs to the elongation factor P family.

The protein resides in the cytoplasm. It participates in protein biosynthesis; polypeptide chain elongation. Involved in peptide bond synthesis. Stimulates efficient translation and peptide-bond synthesis on native or reconstituted 70S ribosomes in vitro. Probably functions indirectly by altering the affinity of the ribosome for aminoacyl-tRNA, thus increasing their reactivity as acceptors for peptidyl transferase. This Brucella ovis (strain ATCC 25840 / 63/290 / NCTC 10512) protein is Elongation factor P.